Reading from the N-terminus, the 236-residue chain is Purine nucleoside phosphorylase DeoD-type (236 aa).

His4 is an a purine D-ribonucleoside binding site. Phosphate-binding positions include Gly20, Arg24, Arg43, and 87–90 (RVGT). A purine D-ribonucleoside is bound by residues 178–180 (EME) and 202–203 (SD). Asp203 serves as the catalytic Proton donor.

The protein belongs to the PNP/UDP phosphorylase family. As to quaternary structure, homohexamer; trimer of homodimers.

It catalyses the reaction a purine D-ribonucleoside + phosphate = a purine nucleobase + alpha-D-ribose 1-phosphate. It carries out the reaction a purine 2'-deoxy-D-ribonucleoside + phosphate = a purine nucleobase + 2-deoxy-alpha-D-ribose 1-phosphate. Catalyzes the reversible phosphorolytic breakdown of the N-glycosidic bond in the beta-(deoxy)ribonucleoside molecules, with the formation of the corresponding free purine bases and pentose-1-phosphate. The sequence is that of Purine nucleoside phosphorylase DeoD-type from Geobacillus kaustophilus (strain HTA426).